A 229-amino-acid chain; its full sequence is Probable transmembrane reductase CYB561D1 (229 aa).

The Cytoplasmic segment spans residues 1 to 24; that stretch reads MQPLEVGLVPAPAGEPRLTRWLRR. Positions 22-224 constitute a Cytochrome b561 domain; that stretch reads LRRGSGILAH…HQISRSYLPR (203 aa). Residues 25 to 45 traverse the membrane as a helical segment; sequence GSGILAHLVALGFTIFLTALS. Topologically, residues 46-53 are lumenal; sequence RPGTSLFS. The helical transmembrane segment at 54-74 threads the bilayer; that stretch reads WHPVFMALAFCLCMAEAILLF. His-55 lines the heme b pocket. Topologically, residues 75–91 are cytoplasmic; the sequence is SPEHSLFFFCSRKARIR. Residues 92 to 112 form a helical membrane-spanning segment; it reads LHWAGQTLAILCAALGLGFII. 2 residues coordinate heme b: His-93 and His-127. The Lumenal portion of the chain corresponds to 113-128; the sequence is SSRTRSELPHLVSWHS. Residues 129 to 149 form a helical membrane-spanning segment; that stretch reads WVGALTLLATAVQALCGLCLL. Residues 150-169 lie on the Cytoplasmic side of the membrane; the sequence is CPRAARVSRVARLKLYHLTC. Residue His-166 participates in heme b binding. The chain crosses the membrane as a helical span at residues 170 to 190; the sequence is GLVVYLMATVTVLLGMYSVWF. Residues 191-193 lie on the Lumenal side of the membrane; that stretch reads QAQ. The helical transmembrane segment at 194 to 214 threads the bilayer; the sequence is IKGAAWYLCLALPVYPALVIM. Residues 215 to 229 are Cytoplasmic-facing; it reads HQISRSYLPRKKMEM.

Requires heme b as cofactor.

Its subcellular location is the membrane. The enzyme catalyses monodehydro-L-ascorbate radical(out) + L-ascorbate(in) = monodehydro-L-ascorbate radical(in) + L-ascorbate(out). The catalysed reaction is Fe(3+)(out) + L-ascorbate(in) = monodehydro-L-ascorbate radical(in) + Fe(2+)(out) + H(+). Probable transmembrane reductase that may use ascorbate as an electron donor and transfer electrons across membranes to reduce monodehydro-L-ascorbate radical and iron cations Fe(3+) in another cellular compartment. This is Probable transmembrane reductase CYB561D1 from Homo sapiens (Human).